The sequence spans 213 residues: Thymidylate kinase (213 aa).

Residue 10–17 participates in ATP binding; the sequence is GLEGAGKT.

This sequence belongs to the thymidylate kinase family.

The enzyme catalyses dTMP + ATP = dTDP + ADP. Phosphorylation of dTMP to form dTDP in both de novo and salvage pathways of dTTP synthesis. This is Thymidylate kinase from Escherichia coli O6:K15:H31 (strain 536 / UPEC).